The following is a 432-amino-acid chain: Probable exopolygalacturonase X (432 aa).

Residues 1-23 form the signal peptide; sequence MKFSYSFVQVVSLLLSLSPSVEG. N-linked (GlcNAc...) asparagine glycosylation is found at Asn-113, Asn-129, and Asn-199. One copy of the PbH1 1 repeat lies at 231-252; sequence SDNIVIQNSVINNGDDCVSFKP. Asp-245 serves as the catalytic Proton donor. Cysteines 247 and 264 form a disulfide. N-linked (GlcNAc...) asparagine glycosylation is found at Asn-253 and Asn-265. PbH1 repeat units follow at residues 254 to 274, 285 to 306, and 327 to 348; these read STNI…SVGS, VQNV…RIKV, and VKNI…EVTQ. Residue His-268 is part of the active site. Residues Asn-292, Asn-297, Asn-329, Asn-354, and Asn-364 are each glycosylated (N-linked (GlcNAc...) asparagine). The stretch at 362–394 is one PbH1 5 repeat; the sequence is PSNLTISDIHFKNFRGTTSGKRDPDVGTIVCSS. Cys-392 and Cys-398 form a disulfide bridge.

Belongs to the glycosyl hydrolase 28 family.

The protein localises to the secreted. It carries out the reaction [(1-&gt;4)-alpha-D-galacturonosyl](n) + H2O = alpha-D-galacturonate + [(1-&gt;4)-alpha-D-galacturonosyl](n-1). Its function is as follows. Specific in hydrolyzing the terminal glycosidic bond of polygalacturonic acid and oligogalacturonates. This is Probable exopolygalacturonase X (pgaX) from Neosartorya fischeri (strain ATCC 1020 / DSM 3700 / CBS 544.65 / FGSC A1164 / JCM 1740 / NRRL 181 / WB 181) (Aspergillus fischerianus).